A 363-amino-acid chain; its full sequence is Alanine racemase (363 aa).

Lysine 39 functions as the Proton acceptor; specific for D-alanine in the catalytic mechanism. Lysine 39 carries the post-translational modification N6-(pyridoxal phosphate)lysine. Arginine 134 serves as a coordination point for substrate. Catalysis depends on tyrosine 251, which acts as the Proton acceptor; specific for L-alanine. Methionine 299 provides a ligand contact to substrate.

It belongs to the alanine racemase family. The cofactor is pyridoxal 5'-phosphate.

It carries out the reaction L-alanine = D-alanine. It participates in amino-acid biosynthesis; D-alanine biosynthesis; D-alanine from L-alanine: step 1/1. Catalyzes the interconversion of L-alanine and D-alanine. May also act on other amino acids. This is Alanine racemase (alr) from Thermodesulfovibrio yellowstonii (strain ATCC 51303 / DSM 11347 / YP87).